We begin with the raw amino-acid sequence, 1001 residues long: Serine/threonine-protein kinase TAO1 (1001 aa).

Serine 9 carries the phosphoserine modification. The Protein kinase domain occupies phenylalanine 28 to valine 281. ATP is bound by residues isoleucine 34–valine 42 and lysine 57. Aspartate 151 serves as the catalytic Proton acceptor. Disordered stretches follow at residues proline 324 to glutamate 380 and glutamate 404 to histidine 431. The span at serine 350–serine 370 shows a compositional bias: low complexity. Residues serine 421 and serine 445 each carry the phosphoserine modification. A coiled-coil region spans residues serine 458–methionine 651. Positions lysine 567–lysine 587 are disordered. Basic and acidic residues predominate over residues proline 577–lysine 587. Residue threonine 669 is modified to Phosphothreonine. Positions lysine 754–alanine 877 form a coiled coil. A disordered region spans residues proline 905–threonine 1001. Residues glycine 906–threonine 915 show a composition bias toward polar residues. Serine 965 is subject to Phosphoserine. The segment covering glycine 975–threonine 1001 has biased composition (polar residues).

It belongs to the protein kinase superfamily. STE Ser/Thr protein kinase family. STE20 subfamily. In terms of assembly, self-associates. Interacts with MAP2K3. Interacts with SPRED1. Interacts with TESK1; the interaction inhibits TAOK1 kinase activity. Interacts with MAP3K7. In terms of processing, proteolytically processed by caspase-3 (CASP3). Post-translationally, autophosphorylated. Phosphorylated by ATM in response to DNA damage. Phosphorylated by LRRK2.

The protein resides in the cytoplasm. It carries out the reaction L-seryl-[protein] + ATP = O-phospho-L-seryl-[protein] + ADP + H(+). The catalysed reaction is L-threonyl-[protein] + ATP = O-phospho-L-threonyl-[protein] + ADP + H(+). Its activity is regulated as follows. Serine/threonine-protein kinase activity is inhibited by SPRED1. In terms of biological role, serine/threonine-protein kinase involved in various processes such as p38/MAPK14 stress-activated MAPK cascade, DNA damage response and regulation of cytoskeleton stability. Phosphorylates MAP2K3, MAP2K6 and MARK2. Acts as an activator of the p38/MAPK14 stress-activated MAPK cascade by mediating phosphorylation and subsequent activation of the upstream MAP2K3 and MAP2K6 kinases. Involved in G-protein coupled receptor signaling to p38/MAPK14. In response to DNA damage, involved in the G2/M transition DNA damage checkpoint by activating the p38/MAPK14 stress-activated MAPK cascade, probably by mediating phosphorylation of MAP2K3 and MAP2K6. Acts as a regulator of cytoskeleton stability by phosphorylating 'Thr-208' of MARK2, leading to activate MARK2 kinase activity and subsequent phosphorylation and detachment of MAPT/TAU from microtubules. Also acts as a regulator of apoptosis: regulates apoptotic morphological changes, including cell contraction, membrane blebbing and apoptotic bodies formation via activation of the MAPK8/JNK cascade. During fetal development, it plays an essential role in the regulation of neuronal differentiation and migration to the cortical plate. This Rattus norvegicus (Rat) protein is Serine/threonine-protein kinase TAO1 (Taok1).